A 700-amino-acid chain; its full sequence is Putative ankyrin repeat protein FPV018 (700 aa).

ANK repeat units lie at residues 29–59 (DRLLSLHNILKENNVDRLRELIESDKDVINM), 63–92 (NRLLPLHIAIEHSDIEIVEMLLDNNAVING), 126–155 (RIRRLLTVNNTEKYTKIVKLLIKHGADLKM), 204–233 (MRRITIKCAIRAVNIELVKHFISNNLLADT), 236–265 (ALEDYFLEAVKTNSPKMVKLFLDSGIDINS), 270–299 (NSHTALYHAVEQENVTLVMLLLNHGADPDI), 301–332 (DIYSMLKYAIMSSKHGVKLFNILVKNGARIRC), 395–424 (CNMYPIHAAVSINTSRLTRLLINKGADVNV), 428–457 (YGKTPIHLACMYSKIGNIKVLIKNGANVNE), 461–490 (YGITPLMICSREGKVSNMEYLLANGADVNQ), and 494–523 (DKNTALTYAIRNKSKECTRVLLEHGADMCF).

This Fowlpox virus (strain NVSL) (FPV) protein is Putative ankyrin repeat protein FPV018.